The sequence spans 277 residues: MAAVSVYAPPVGGFSFDNCRRNAVLEADFAKRGYKLPKVRKTGTTIAGVVYKDGIVLGADTRATEGMVVADKNCSKIHFISPNIYCCGAGTAADTDMTTQLISSNLELHSLSTGRLPRVVTANRMLKQMLFRYQGYIGAALVLGGVDVTGPHLYSIYPHGSTDKLPYVTMGSGSLAAMAVFEDKFRPDMEEEEAKNLVSEAIAAGIFNDLGSGSNIDLCVISKNKLDFLRPYTVPNKKGTRLGRYRCEKGTTAVLTEKITPLEIEVLEETVQTMDTS.

A propeptide spans 1 to 43 (MAAVSVYAPPVGGFSFDNCRRNAVLEADFAKRGYKLPKVRKTG) (removed in mature form). Threonine 44 functions as the Nucleophile in the catalytic mechanism.

It belongs to the peptidase T1B family. In terms of assembly, the 26S proteasome consists of a 20S proteasome core and two 19S regulatory subunits. The 20S proteasome core is a barrel-shaped complex made of 28 subunits that are arranged in four stacked rings. The two outer rings are each formed by seven alpha subunits, and the two inner rings are formed by seven beta subunits. The proteolytic activity is exerted by three beta-subunits PSMB5, PSMB6 and PSMB7. (Microbial infection) Interacts with HIV-1 Tat protein. As to expression, expressed at a low level in colonic mucosa. Up-regulated in colorectal cancer tissues.

The protein localises to the cytoplasm. Its subcellular location is the nucleus. It catalyses the reaction Cleavage of peptide bonds with very broad specificity.. Functionally, component of the 20S core proteasome complex involved in the proteolytic degradation of most intracellular proteins. This complex plays numerous essential roles within the cell by associating with different regulatory particles. Associated with two 19S regulatory particles, forms the 26S proteasome and thus participates in the ATP-dependent degradation of ubiquitinated proteins. The 26S proteasome plays a key role in the maintenance of protein homeostasis by removing misfolded or damaged proteins that could impair cellular functions, and by removing proteins whose functions are no longer required. Associated with the PA200 or PA28, the 20S proteasome mediates ubiquitin-independent protein degradation. This type of proteolysis is required in several pathways including spermatogenesis (20S-PA200 complex) or generation of a subset of MHC class I-presented antigenic peptides (20S-PA28 complex). Within the 20S core complex, PSMB7 displays a trypsin-like activity. This chain is Proteasome subunit beta type-7, found in Homo sapiens (Human).